A 259-amino-acid polypeptide reads, in one-letter code: Large ribosomal subunit protein uL3c (259 aa).

Residues 1–37 (LKTTPLTLRSPFLHRLPLRALKTHKPTSLHISKSSIS) constitute a chloroplast transit peptide. The segment at 176–211 (MTHGSKSHRQLGSIGAGTTPGRVYKGKKMPGRMGGT) is disordered. The segment covering 199 to 211 (YKGKKMPGRMGGT) has biased composition (basic residues).

It belongs to the universal ribosomal protein uL3 family. As to quaternary structure, part of the 50S ribosomal subunit.

The protein localises to the plastid. It is found in the chloroplast. One of the primary rRNA binding proteins, it binds directly near the 3'-end of the 23S rRNA, where it nucleates assembly of the 50S subunit. This Nicotiana tabacum (Common tobacco) protein is Large ribosomal subunit protein uL3c (RPL3).